A 382-amino-acid polypeptide reads, in one-letter code: Galactokinase (382 aa).

34–37 (EHTD) contributes to the substrate binding site. Position 124–130 (124–130 (GAGLSSS)) interacts with ATP. Mg(2+)-binding residues include Ser-130 and Glu-162. Asp-174 functions as the Proton acceptor in the catalytic mechanism. Tyr-223 provides a ligand contact to substrate.

It belongs to the GHMP kinase family. GalK subfamily.

It localises to the cytoplasm. It carries out the reaction alpha-D-galactose + ATP = alpha-D-galactose 1-phosphate + ADP + H(+). Its pathway is carbohydrate metabolism; galactose metabolism. Functionally, catalyzes the transfer of the gamma-phosphate of ATP to D-galactose to form alpha-D-galactose-1-phosphate (Gal-1-P). The chain is Galactokinase from Salmonella gallinarum (strain 287/91 / NCTC 13346).